The sequence spans 1633 residues: Serine-aspartate repeat-containing protein F (1633 aa).

The first 45 residues, Met1 to Ala45, serve as a signal peptide directing secretion. Residues Ala46 to Pro678 form a ligand binding A region region. Positions Lys51–Asp269 are disordered. The span at Ala61–Ser74 shows a compositional bias: basic and acidic residues. Composition is skewed to polar residues over residues Gly85–Thr99 and Pro146–Asn168. Positions Lys175–Thr184 are enriched in basic and acidic residues. A compositionally biased stretch (polar residues) spans Gln186–Gln226. The segment covering Leu227–Thr253 has biased composition (basic and acidic residues). Over residues Lys255–Ser266 the composition is skewed to polar residues. CNA-B domains lie at Thr679–Pro797, Lys798–Pro907, Ile908–Pro1018, and Lys1019–Asp1129. The type I collagen binding region stretch occupies residues Thr679 to Asp1129. Residues Phe862–Thr889 form a disordered region. The interval Lys1085–Thr1608 is disordered. A compositionally biased stretch (basic and acidic residues) spans Glu1107–Phe1119. Residues Tyr1125 to Ser1584 are compositionally biased toward acidic residues. Positions Asp1585–Lys1606 are enriched in basic and acidic residues. The LPXTG sorting signal signature appears at Leu1594 to Gly1598. Thr1597 is modified (pentaglycyl murein peptidoglycan amidated threonine). Residues Gly1598–Lys1633 constitute a propeptide, removed by sortase.

It belongs to the serine-aspartate repeat-containing protein (SDr) family.

It localises to the secreted. The protein resides in the cell wall. Binds to type I collagen via alpha-2(I) or alpha-1(I) chains. This chain is Serine-aspartate repeat-containing protein F (sdrF), found in Staphylococcus epidermidis (strain ATCC 12228 / FDA PCI 1200).